The sequence spans 770 residues: Amyloid-beta precursor protein (770 aa).

An N-terminal signal peptide occupies residues 1–17 (MLPGLALLLLAAWTARA). The Extracellular segment spans residues 18 to 701 (LEVPTDGNAG…AEDVGSNKGA (684 aa)). Positions 28–123 (LLAEPQIAMF…PYRCLVGEFV (96 aa)) are GFLD subdomain. Residues 28–189 (LLAEPQIAMF…RGVEFVCCPL (162 aa)) form the E1 domain. 6 cysteine pairs are disulfide-bonded: Cys-38-Cys-62, Cys-73-Cys-117, Cys-98-Cys-105, Cys-133-Cys-187, Cys-144-Cys-174, and Cys-158-Cys-186. Position 96–110 (96–110 (NWCKRGRKQCKTHPH)) interacts with heparin. A cuBD subdomain region spans residues 131-189 (DKCKFLHQERMDVCETHLHWHTVAKETCSEKSTNLHDYGMLLPCGIDKFRGVEFVCCPL). Residues His-147, His-151, and Tyr-168 each contribute to the Cu(2+) site. The tract at residues 181–188 (GVEFVCCP) is zinc-binding. Residues Glu-183, Cys-186, and Cys-187 each coordinate Zn(2+). Over residues 194–207 (DNVDSADAEEDDSD) the composition is skewed to acidic residues. The tract at residues 194–284 (DNVDSADAEE…TTTTTTESVE (91 aa)) is disordered. Ser-198 carries the post-translational modification Phosphoserine; by CK2. Residue Ser-206 is modified to Phosphoserine; by CK1. Sulfotyrosine occurs at positions 217 and 262. Residues 228-264 (VAEEEEVAEVEEEEADDDEDDEDGDEVEEEAEEPYEE) show a composition bias toward acidic residues. Low complexity predominate over residues 268-281 (RTTSIATTTTTTTE). Cystine bridges form between Cys-291–Cys-341, Cys-300–Cys-324, and Cys-316–Cys-337. In terms of domain architecture, BPTI/Kunitz inhibitor spans 291–341 (CSEQAETGPCRAMISRWYFDVTEGKCAPFFYGGCGGNRNNFDTEEYCMAVC). At Tyr-336 the chain carries Sulfotyrosine. The OX-2 motif lies at 344–365 (VMSQSLLKTTQEPLARDPVKLP). Residues 374 to 565 (AVDKYLETPG…EEIQDEVDEL (192 aa)) enclose the E2 domain. The tract at residues 391–423 (FQKAKERLEAKHRERMSQVMREWEEAERQAKNL) is heparin-binding. Phosphoserine is present on Ser-441. Residues 491–522 (FNMLKKYVRAEQKDRQHTLKHFEHVRMVDPKK) are heparin-binding. Tyr-497 is modified (phosphotyrosine). The collagen-binding stretch occupies residues 523–540 (AAQIRSQVMTHLRVIYER). N-linked (GlcNAc...) asparagine glycosylation is found at Asn-542 and Asn-571. Cu(2+)-binding residues include His-677, Tyr-681, His-684, and His-685. Zn(2+) contacts are provided by His-677, Tyr-681, His-684, and His-685. Residues 695–722 (VGSNKGAIIGLMVGGVVIATVIVITLVM) are interaction with PSEN1. Residues 702–722 (IIGLMVGGVVIATVIVITLVM) traverse the membrane as a helical segment. Residues 723 to 770 (LKKKQYTSIHHGVVEVDAAVTPEERHLSKMQQNGYENPTYKFFEQMQN) lie on the Cytoplasmic side of the membrane. The Basolateral sorting signal motif lies at 724–734 (KKKQYTSIHHG). Position 729 is a phosphothreonine (Thr-729). Ser-730 carries the post-translational modification Phosphoserine; by APP-kinase I. The tract at residues 732 to 751 (HHGVVEVDAAVTPEERHLSK) is interaction with G(o)-alpha. Thr-743 bears the Phosphothreonine; by CDK5 and MAPK10 mark. Residues 756–770 (GYENPTYKFFEQMQN) are required for the interaction with KIF5B and for anterograde transport in axons. Tyr-757 is subject to Phosphotyrosine; by ABL1. A YENPXY motif; contains endocytosis signal motif is present at residues 757 to 762 (YENPTY). Residue Lys-763 forms a Glycyl lysine isopeptide (Lys-Gly) (interchain with G-Cter in ubiquitin) linkage.

It belongs to the APP family. As to quaternary structure, binds, via its C-terminus, to the PID domain of several cytoplasmic proteins, including APBB family members, the APBA family, MAPK8IP1, SHC1 and NUMB and DAB1. Binding to DAB1 inhibits its serine phosphorylation. Interacts (via NPXY motif) with DAB2 (via PID domain); the interaction is impaired by tyrosine phosphorylation of the NPXY motif. Also interacts with GPCR-like protein BPP, APPBP1, IB1, KNS2 (via its TPR domains), APPBP2 (via BaSS) and DDB1. In vitro, it binds MAPT via the MT-binding domains. Associates with microtubules in the presence of ATP and in a kinesin-dependent manner. Interacts, through a C-terminal domain, with GNAO1. Amyloid-beta protein 42 binds CHRNA7 in hippocampal neurons. Amyloid-beta associates with HADH2. Interacts with CPEB1, ANKS1B and AGER. Interacts with ITM2B. Interacts with ITM2C. Interacts with IDE. Can form homodimers; dimerization is enhanced in the presence of Cu(2+) ions. Can form homodimers; this is promoted by heparin binding. Amyloid-beta protein 40 interacts with S100A9. CTF-alpha product of APP interacts with GSAP. Interacts with SORL1 (via N-terminal ectodomain); this interaction retains APP in the trans-Golgi network and reduces processing into soluble APP-alpha and amyloid-beta peptides. The C99 fragment also interacts with SORL1. Interacts with PLD3. Interacts with VDAC1. Interacts with NSG1; could regulate APP processing. Amyloid-beta protein 42 interacts with FPR2. Interacts (via transmembrane region) with PSEN1; the interaction is direct. Interacts with LRRK2. Interacts (via cytoplasmic domain) with KIF5B. Interacts (via C-terminus) with APBB2/FE65L1 (via C-terminus). Interacts (via intracellular domain) with APBB3. In terms of processing, proteolytically processed under normal cellular conditions. Cleavage either by alpha-secretase, beta-secretase or theta-secretase leads to generation and extracellular release of soluble APP peptides, S-APP-alpha and S-APP-beta, and the retention of corresponding membrane-anchored C-terminal fragments, C80, C83 and C99. Subsequent processing of C80 and C83 by gamma-secretase yields P3 peptides. This is the major secretory pathway and is non-amyloidogenic. Alternatively, presenilin/nicastrin-mediated gamma-secretase processing of C99 releases the amyloid-beta proteins, amyloid-beta protein 40 and amyloid-beta protein 42, major components of amyloid plaques, and the cytotoxic C-terminal fragments, gamma-CTF(50), gamma-CTF(57) and gamma-CTF(59). PSEN1 cleavage is more efficient with C83 than with C99 as substrate (in vitro). Amyloid-beta protein 40 and Amyloid-beta protein 42 are cleaved by ACE. Many other minor amyloid-beta peptides, amyloid-beta 1-X peptides, are found in cerebral spinal fluid (CSF) including the amyloid-beta X-15 peptides, produced from the cleavage by alpha-secretase. Proteolytically cleaved by caspases during neuronal apoptosis. Cleavage at Asp-739 by either caspase-3, -8 or -9 results in the production of the neurotoxic C31 peptide and the increased production of amyloid-beta peptides. Post-translationally, N- and O-glycosylated. In terms of processing, phosphorylation in the C-terminal on tyrosine, threonine and serine residues is neuron-specific. Phosphorylation can affect APP processing, neuronal differentiation and interaction with other proteins. Phosphorylated on Thr-743 in neuronal cells by Cdc5 kinase and Mapk10, in dividing cells by Cdc2 kinase in a cell-cycle dependent manner with maximal levels at the G2/M phase and, in vitro, by GSK-3-beta. The Thr-743 phosphorylated form causes a conformational change which reduces binding of Fe65 family members. In dopaminergic (DA) neurons, phosphorylation on Thr-743 by LRKK2 promotes the production and the nuclear translocation of the APP intracellular domain (AICD) which induces DA neuron apoptosis. Phosphorylation on Tyr-757 is required for SHC binding. Phosphorylated in the extracellular domain by casein kinases on both soluble and membrane-bound APP. This phosphorylation is inhibited by heparin. Trophic-factor deprivation triggers the cleavage of surface APP by beta-secretase to release sAPP-beta which is further cleaved to release an N-terminal fragment of APP (N-APP). Post-translationally, amyloid-beta peptides are degraded by IDE. In terms of processing, sulfated on tyrosine residues.

It localises to the cell membrane. The protein localises to the membrane. Its subcellular location is the perikaryon. The protein resides in the cell projection. It is found in the growth cone. It localises to the clathrin-coated pit. The protein localises to the early endosome. Its subcellular location is the cytoplasmic vesicle. The protein resides in the endoplasmic reticulum. It is found in the golgi apparatus. It localises to the secreted. The protein localises to the cell surface. Its subcellular location is the nucleus. The protein resides in the cytoplasm. Functionally, functions as a cell surface receptor and performs physiological functions on the surface of neurons relevant to neurite growth, neuronal adhesion and axonogenesis. Interaction between APP molecules on neighboring cells promotes synaptogenesis. Involved in cell mobility and transcription regulation through protein-protein interactions. Can promote transcription activation through binding to APBB1-KAT5 and inhibit Notch signaling through interaction with Numb. Couples to apoptosis-inducing pathways such as those mediated by G(o) and JIP. Inhibits G(o)-alpha ATPase activity. Acts as a kinesin I membrane receptor, mediating the axonal transport of beta-secretase and presenilin 1. By acting as a kinesin I membrane receptor, plays a role in axonal anterograde transport of cargo towards synapses in axons. May be involved in copper homeostasis/oxidative stress through copper ion reduction. In vitro, copper-metallated APP induces neuronal death directly or is potentiated through Cu(2+)-mediated low-density lipoprotein oxidation. Can regulate neurite outgrowth through binding to components of the extracellular matrix such as heparin and collagen I and IV. Induces a AGER-dependent pathway that involves activation of p38 MAPK, resulting in internalization of amyloid-beta peptide and mitochondrial dysfunction in cultured cortical neurons. Provides Cu(2+) ions for GPC1 which are required for release of nitric oxide (NO) and subsequent degradation of the heparan sulfate chains on GPC1. In terms of biological role, amyloid-beta peptides are lipophilic metal chelators with metal-reducing activity. Binds transient metals such as copper, zinc and iron. Its function is as follows. The gamma-CTF peptides as well as the caspase-cleaved peptides, including C31, are potent enhancers of neuronal apoptosis. In Pan troglodytes (Chimpanzee), this protein is Amyloid-beta precursor protein.